The sequence spans 466 residues: Putative D-3-phosphoglycerate dehydrogenase (466 aa).

A compositionally biased stretch (basic and acidic residues) spans 1 to 15 (MDIKGGRRGNVEDSL). Residues 1–26 (MDIKGGRRGNVEDSLNKLSLSPPDNN) are disordered. Positions 16 to 26 (NKLSLSPPDNN) are enriched in polar residues. S87 is modified (phosphoserine). NAD(+)-binding positions include 205–206 (HI) and D225. The residue at position 258 (S258) is a Phosphoserine. NAD(+) contacts are provided by residues 282–284 (ASR) and D308. The active site involves R284. E313 is an active-site residue. Catalysis depends on H344, which acts as the Proton donor. Residue 344–347 (HIGG) coordinates NAD(+). The ACT domain occupies 396-466 (RVLFVHRNVP…PCKINTRLLY (71 aa)).

The protein belongs to the D-isomer specific 2-hydroxyacid dehydrogenase family.

It catalyses the reaction (2R)-3-phosphoglycerate + NAD(+) = 3-phosphooxypyruvate + NADH + H(+). The enzyme catalyses (R)-2-hydroxyglutarate + NAD(+) = 2-oxoglutarate + NADH + H(+). The protein operates within amino-acid biosynthesis; L-serine biosynthesis; L-serine from 3-phospho-D-glycerate: step 1/3. In terms of biological role, catalyzes the reversible oxidation of 3-phospho-D-glycerate to 3-phosphonooxypyruvate, the first step of the phosphorylated L-serine biosynthesis pathway. Also catalyzes the reversible oxidation of 2-hydroxyglutarate to 2-oxoglutarate. The protein is Putative D-3-phosphoglycerate dehydrogenase of Schizosaccharomyces pombe (strain 972 / ATCC 24843) (Fission yeast).